A 103-amino-acid polypeptide reads, in one-letter code: Large ribosomal subunit protein bL21 (103 aa).

It belongs to the bacterial ribosomal protein bL21 family. Part of the 50S ribosomal subunit. Contacts protein L20.

Its function is as follows. This protein binds to 23S rRNA in the presence of protein L20. In Pasteurella multocida (strain Pm70), this protein is Large ribosomal subunit protein bL21.